The sequence spans 144 residues: Large ribosomal subunit protein uL15 (144 aa).

The segment at 1–54 is disordered; sequence MKLNTIKPAEGAKHARRRVGRGIGSGLGKTGGRGHKGQKSRAGGFHKVGFEGGQ. The span at 21-31 shows a compositional bias: gly residues; that stretch reads RGIGSGLGKTG.

This sequence belongs to the universal ribosomal protein uL15 family. As to quaternary structure, part of the 50S ribosomal subunit.

In terms of biological role, binds to the 23S rRNA. The polypeptide is Large ribosomal subunit protein uL15 (Methylobacillus flagellatus (strain ATCC 51484 / DSM 6875 / VKM B-1610 / KT)).